Consider the following 144-residue polypeptide: Grifin (144 aa).

In terms of domain architecture, Galectin spans 5–133 (FEAFCAGGLA…DHQLAQVELA (129 aa)). Residue Ser138 is modified to Phosphoserine.

Homodimer. In terms of tissue distribution, lens-specific. Located at the interface between lens fiber cells (at protein level).

The polypeptide is Grifin (Grifin) (Rattus norvegicus (Rat)).